Reading from the N-terminus, the 98-residue chain is uncharacterized protein (98 aa).

Positions 30-98 (KKVVPSVKIH…RRKFCRVRLE (69 aa)) constitute an MOSC domain.

This is an uncharacterized protein from Haemophilus influenzae (strain ATCC 51907 / DSM 11121 / KW20 / Rd).